A 235-amino-acid polypeptide reads, in one-letter code: Large ribosomal subunit protein uL1 (235 aa).

It belongs to the universal ribosomal protein uL1 family. In terms of assembly, part of the 50S ribosomal subunit.

Binds directly to 23S rRNA. The L1 stalk is quite mobile in the ribosome, and is involved in E site tRNA release. In terms of biological role, protein L1 is also a translational repressor protein, it controls the translation of the L11 operon by binding to its mRNA. The chain is Large ribosomal subunit protein uL1 from Prochlorococcus marinus (strain NATL1A).